The primary structure comprises 49 residues: Large ribosomal subunit protein bL33B (49 aa).

Belongs to the bacterial ribosomal protein bL33 family.

This chain is Large ribosomal subunit protein bL33B, found in Latilactobacillus sakei subsp. sakei (strain 23K) (Lactobacillus sakei subsp. sakei).